Reading from the N-terminus, the 419-residue chain is Isocitrate dehydrogenase [NADP] 1 (419 aa).

Thr-105 serves as a coordination point for NADP(+). 5 residues coordinate D-threo-isocitrate: Ser-114, Asn-116, Arg-120, Arg-130, and Arg-154. Residue Asp-308 participates in Mg(2+) binding. Residues 340–346 (HGTAPKY), Asn-353, Tyr-392, and Arg-396 each bind NADP(+).

The protein belongs to the isocitrate and isopropylmalate dehydrogenases family. In terms of assembly, homodimer. The cofactor is Mg(2+). Requires Mn(2+) as cofactor.

The enzyme catalyses D-threo-isocitrate + NADP(+) = 2-oxoglutarate + CO2 + NADPH. Its activity is regulated as follows. IDH activity is not significantly affected by monovalent cations. The combined addition of Mn(2+) and another divalent cation results in the decrease of the activity. In terms of biological role, catalyzes the oxidative decarboxylation of isocitrate to 2-oxoglutarate and carbon dioxide with the concomitant reduction of NADP(+). Cannot use NAD(+). The chain is Isocitrate dehydrogenase [NADP] 1 from Psychrobacter sp. (strain 13A).